The primary structure comprises 244 residues: NAD(P)H-quinone oxidoreductase subunit K (244 aa).

[4Fe-4S] cluster-binding residues include Cys-60, Cys-61, Cys-125, and Cys-156.

Belongs to the complex I 20 kDa subunit family. As to quaternary structure, NDH-1 can be composed of about 15 different subunits; different subcomplexes with different compositions have been identified which probably have different functions. [4Fe-4S] cluster is required as a cofactor.

It localises to the cellular thylakoid membrane. It carries out the reaction a plastoquinone + NADH + (n+1) H(+)(in) = a plastoquinol + NAD(+) + n H(+)(out). The catalysed reaction is a plastoquinone + NADPH + (n+1) H(+)(in) = a plastoquinol + NADP(+) + n H(+)(out). Functionally, NDH-1 shuttles electrons from an unknown electron donor, via FMN and iron-sulfur (Fe-S) centers, to quinones in the respiratory and/or the photosynthetic chain. The immediate electron acceptor for the enzyme in this species is believed to be plastoquinone. Couples the redox reaction to proton translocation, and thus conserves the redox energy in a proton gradient. Cyanobacterial NDH-1 also plays a role in inorganic carbon-concentration. The chain is NAD(P)H-quinone oxidoreductase subunit K from Prochlorococcus marinus (strain AS9601).